The sequence spans 347 residues: Ketol-acid reductoisomerase (NADP(+)) (347 aa).

The region spanning 3–182 (TKMFYDKDID…GSGRAGILET (180 aa)) is the KARI N-terminal Rossmann domain. Residues 26–29 (YGAQ), Arg49, Ser53, and 83–86 (DELQ) each bind NADP(+). His108 is an active-site residue. NADP(+) is bound at residue Gly134. In terms of domain architecture, KARI C-terminal knotted spans 183–328 (TFEEETTEDL…KKVRAMMPWI (146 aa)). Residues Asp191, Glu195, Glu227, and Glu231 each contribute to the Mg(2+) site. Ser252 is a substrate binding site.

The protein belongs to the ketol-acid reductoisomerase family. The cofactor is Mg(2+).

The catalysed reaction is (2R)-2,3-dihydroxy-3-methylbutanoate + NADP(+) = (2S)-2-acetolactate + NADPH + H(+). It catalyses the reaction (2R,3R)-2,3-dihydroxy-3-methylpentanoate + NADP(+) = (S)-2-ethyl-2-hydroxy-3-oxobutanoate + NADPH + H(+). Its pathway is amino-acid biosynthesis; L-isoleucine biosynthesis; L-isoleucine from 2-oxobutanoate: step 2/4. It functions in the pathway amino-acid biosynthesis; L-valine biosynthesis; L-valine from pyruvate: step 2/4. Involved in the biosynthesis of branched-chain amino acids (BCAA). Catalyzes an alkyl-migration followed by a ketol-acid reduction of (S)-2-acetolactate (S2AL) to yield (R)-2,3-dihydroxy-isovalerate. In the isomerase reaction, S2AL is rearranged via a Mg-dependent methyl migration to produce 3-hydroxy-3-methyl-2-ketobutyrate (HMKB). In the reductase reaction, this 2-ketoacid undergoes a metal-dependent reduction by NADPH to yield (R)-2,3-dihydroxy-isovalerate. This Leuconostoc mesenteroides subsp. mesenteroides (strain ATCC 8293 / DSM 20343 / BCRC 11652 / CCM 1803 / JCM 6124 / NCDO 523 / NBRC 100496 / NCIMB 8023 / NCTC 12954 / NRRL B-1118 / 37Y) protein is Ketol-acid reductoisomerase (NADP(+)).